A 320-amino-acid chain; its full sequence is Ribosome production factor 2 homolog (320 aa).

A Brix domain is found at Arg-30–Asp-234. The interval Leu-268–Ser-320 is disordered. A compositionally biased stretch (low complexity) spans Leu-302–Ala-311.

It belongs to the RPF2 family.

Its subcellular location is the nucleus. It is found in the nucleolus. Functionally, required for normal assembly of the mitotic spindle. May be involved in both centrosome-dependent and centrosome-independent spindle assembly programs. In Drosophila melanogaster (Fruit fly), this protein is Ribosome production factor 2 homolog.